A 152-amino-acid polypeptide reads, in one-letter code: Transcriptional repressor NrdR (152 aa).

Residues M1 to G10 show a composition bias toward polar residues. The interval M1–E21 is disordered. A zinc finger lies at C3–C34. Residues L49–V139 enclose the ATP-cone domain.

Belongs to the NrdR family. It depends on Zn(2+) as a cofactor.

Its function is as follows. Negatively regulates transcription of bacterial ribonucleotide reductase nrd genes and operons by binding to NrdR-boxes. This is Transcriptional repressor NrdR from Bacillus velezensis (strain DSM 23117 / BGSC 10A6 / LMG 26770 / FZB42) (Bacillus amyloliquefaciens subsp. plantarum).